The sequence spans 564 residues: Rhodopsin kinase GRK1 (564 aa).

Residues 1-15 (MDFGSLETVVANSAF) form an interaction with RCVRN region. Residues 1 to 189 (MDFGSLETVV…LEAQPIGEDW (189 aa)) are N-terminal. At serine 5 the chain carries Phosphoserine. A Phosphothreonine modification is found at threonine 8. Serine 21 bears the Phosphoserine; by PKA and autocatalysis mark. One can recognise an RGS domain in the interval 58-175 (FDNLCSEQPI…LGSLYFLRFL (118 aa)). The region spanning 190–455 (FLDFRVLGKG…CDALRANVLF (266 aa)) is the Protein kinase domain. ATP-binding positions include 196 to 204 (LGKGGFGEV) and lysine 219. The active-site Proton acceptor is the aspartate 317. An AGC-kinase C-terminal domain is found at 456 to 521 (KDISWRQLEA…GNCSIPWQEE (66 aa)). The interval 456 to 564 (KDISWRQLEA…TAKSGMCLIS (109 aa)) is C-terminal. Serine 491 carries the post-translational modification Phosphoserine; by autocatalysis. Threonine 492 is subject to Phosphothreonine; by autocatalysis. The residue at position 561 (cysteine 561) is a Cysteine methyl ester. The S-farnesyl cysteine moiety is linked to residue cysteine 561. A propeptide spans 562 to 564 (LIS) (removed in mature form).

This sequence belongs to the protein kinase superfamily. AGC Ser/Thr protein kinase family. GPRK subfamily. As to quaternary structure, interacts (via N-terminus) with RCVRN (via C-terminus); the interaction is Ca(2+)-dependent. Interacts (when prenylated) with PDE6D; this promotes release from membranes. May form a complex composed of RHO, GRK1 and RCVRN in a Ca(2+)-dependent manner; RCVRN prevents the interaction between GRK1 and RHO. Post-translationally, autophosphorylated, Ser-21 is a minor site of autophosphorylation compared to Ser-491 and Thr-492. Phosphorylation at Ser-21 is regulated by light and activated by cAMP. In terms of processing, farnesylation is required for full activity. As to expression, detected in retina (at protein level). Retina-specific. Expressed in rod and cone photoreceptor cells.

Its subcellular location is the membrane. The protein resides in the cell projection. It is found in the cilium. The protein localises to the photoreceptor outer segment. It catalyses the reaction L-threonyl-[rhodopsin] + ATP = O-phospho-L-threonyl-[rhodopsin] + ADP + H(+). The enzyme catalyses L-seryl-[rhodopsin] + ATP = O-phospho-L-seryl-[rhodopsin] + ADP + H(+). With respect to regulation, inhibited by RCVRN, which prevents the interaction between GRK1 and RHO. Inhibition is calcium-dependent. Functionally, retina-specific kinase involved in the signal turnoff via phosphorylation of rhodopsin (RHO), the G protein- coupled receptor that initiates the phototransduction cascade. This rapid desensitization is essential for scotopic vision and permits rapid adaptation to changes in illumination. May play a role in the maintenance of the outer nuclear layer in the retina. This Rattus norvegicus (Rat) protein is Rhodopsin kinase GRK1.